A 196-amino-acid chain; its full sequence is Translation initiation factor IF-3 (196 aa).

This sequence belongs to the IF-3 family. As to quaternary structure, monomer.

It is found in the cytoplasm. IF-3 binds to the 30S ribosomal subunit and shifts the equilibrium between 70S ribosomes and their 50S and 30S subunits in favor of the free subunits, thus enhancing the availability of 30S subunits on which protein synthesis initiation begins. The polypeptide is Translation initiation factor IF-3 (Wigglesworthia glossinidia brevipalpis).